The chain runs to 108 residues: Hydrogenase expression/formation protein HupN (108 aa).

Residues 88-108 (REPQLPPHLQAQLPPKEPNSP) are disordered.

Belongs to the HupF/HypC family.

The polypeptide is Hydrogenase expression/formation protein HupN (hupN) (Azotobacter chroococcum mcd 1).